The primary structure comprises 203 residues: A-type ATP synthase subunit E (203 aa).

This sequence belongs to the V-ATPase E subunit family. In terms of assembly, has multiple subunits with at least A(3), B(3), C, D, E, F, H, I and proteolipid K(x).

It localises to the cell membrane. In terms of biological role, component of the A-type ATP synthase that produces ATP from ADP in the presence of a proton gradient across the membrane. The protein is A-type ATP synthase subunit E of Desulfurococcus sp. (strain SY).